Consider the following 241-residue polypeptide: Purine nucleoside phosphorylase DeoD-type (241 aa).

Histidine 5 is an a purine D-ribonucleoside binding site. Residues glycine 21, arginine 25, arginine 44, and 88-91 each bind phosphate; that span reads RVGS. Residues 180–182 and 204–205 contribute to the a purine D-ribonucleoside site; these read EME and SD. The active-site Proton donor is aspartate 205.

It belongs to the PNP/UDP phosphorylase family. Homohexamer; trimer of homodimers.

The catalysed reaction is a purine D-ribonucleoside + phosphate = a purine nucleobase + alpha-D-ribose 1-phosphate. It catalyses the reaction a purine 2'-deoxy-D-ribonucleoside + phosphate = a purine nucleobase + 2-deoxy-alpha-D-ribose 1-phosphate. Catalyzes the reversible phosphorolytic breakdown of the N-glycosidic bond in the beta-(deoxy)ribonucleoside molecules, with the formation of the corresponding free purine bases and pentose-1-phosphate. The protein is Purine nucleoside phosphorylase DeoD-type of Yersinia enterocolitica serotype O:8 / biotype 1B (strain NCTC 13174 / 8081).